A 191-amino-acid chain; its full sequence is Programmed cell death protein 6 (191 aa).

Alanine 2 is subject to N-acetylalanine. 5 consecutive EF-hand domains span residues 23–58 (PDQSFLWNVFQRVDKDRSGVISDTELQQALSNGTWT), 59–89 (PFNPVTVRSIISMFDRENKAGVNFSEFTGVW), 90–125 (KYITDWQNVFRTYDRDNSGMIDKNELKQALSGFGYR), 126–161 (LSDQFHDILIRKFDRQGRGQIAFDDFIQGCIVLQRL), and 162–191 (TDIFRRYDTDQDGWIQVSYEQYLSMVFSIV). Aspartate 36, aspartate 38, serine 40, valine 42, and glutamate 47 together coordinate Ca(2+). Ca(2+)-binding residues include aspartate 103, aspartate 105, serine 107, methionine 109, and glutamate 114. Residues aspartate 169, aspartate 171, aspartate 173, and tryptophan 175 each coordinate Mg(2+).

Homodimer and heterodimer; heterodimerizes (via the EF-hand 5) with PEF1. Isoform 1 and isoform 2 self-associate; probably forming homodimers. Interacts with CPNE4 (via VWFA domain). Interacts with PDCD6IP; the interaction is calcium-dependent. Interacts with RBM22. Interacts with PLSCR4. Interacts with ANXA7 and TSG101. Interacts with DAPK1. Interacts with SEC31A; the interaction is calcium-dependent and promotes monoubiquitination of SEC31A. Interacts with ANXA11 (via N-terminus); the interaction is calcium-dependent. Interacts with PLSCR3 (via N-terminus); the interaction is calcium-dependent. Interacts with MCOLN1; the interaction is calcium-dependent. Interacts with KDR; the interaction is calcium-dependent. Interacts with HEBP2; the interaction is calcium-dependent. Interacts with TFG. Isoform 1: Interacts with SHISA5, leading to stabilize it. Isoform 2: Does not interact with SHISA5. Isoform 2: Does not interact with PDCD6IP, TSG101, ANXA7 and ANXA11.

It localises to the endoplasmic reticulum membrane. The protein resides in the cytoplasmic vesicle. The protein localises to the COPII-coated vesicle membrane. Its subcellular location is the cytoplasm. It is found in the nucleus. It localises to the endosome. Calcium sensor that plays a key role in processes such as endoplasmic reticulum (ER)-Golgi vesicular transport, endosomal biogenesis or membrane repair. Acts as an adapter that bridges unrelated proteins or stabilizes weak protein-protein complexes in response to calcium: calcium-binding triggers exposure of apolar surface, promoting interaction with different sets of proteins thanks to 3 different hydrophobic pockets, leading to translocation to membranes. Involved in ER-Golgi transport by promoting the association between PDCD6IP and TSG101, thereby bridging together the ESCRT-III and ESCRT-I complexes. Together with PEF1, acts as a calcium-dependent adapter for the BCR(KLHL12) complex, a complex involved in ER-Golgi transport by regulating the size of COPII coats. In response to cytosolic calcium increase, the heterodimer formed with PEF1 interacts with, and bridges together the BCR(KLHL12) complex and SEC31 (SEC31A or SEC31B), promoting monoubiquitination of SEC31 and subsequent collagen export, which is required for neural crest specification. Involved in the regulation of the distribution and function of MCOLN1 in the endosomal pathway. Promotes localization and polymerization of TFG at endoplasmic reticulum exit site. Required for T-cell receptor-, Fas-, and glucocorticoid-induced apoptosis. May mediate Ca(2+)-regulated signals along the death pathway: interaction with DAPK1 can accelerate apoptotic cell death by increasing caspase-3 activity. Its role in apoptosis may however be indirect, as suggested by knockout experiments. May inhibit KDR/VEGFR2-dependent angiogenesis; the function involves inhibition of VEGF-induced phosphorylation of the Akt signaling pathway. In case of infection by HIV-1 virus, indirectly inhibits HIV-1 production by affecting viral Gag expression and distribution. In terms of biological role, has a lower Ca(2+) affinity than isoform 1. The protein is Programmed cell death protein 6 (PDCD6) of Homo sapiens (Human).